We begin with the raw amino-acid sequence, 407 residues long: 41 kDa spicule matrix protein (407 aa).

Residues 1–17 (MKGVLFIVASLVAFATG) form the signal peptide. Positions 29–160 (SGQSCYRYFN…PGRAPVMKRQ (132 aa)) constitute a C-type lectin domain. Disordered stretches follow at residues 143–176 (PQNPMSGPPGRAPVMKRQNPPVRPGQGGRQIPQG) and 204–407 (IGQQ…DALA). Residues 223–369 (NQPGMGGRQP…MGGRQPGMGG (147 aa)) are compositionally biased toward gly residues. The span at 370-398 (QQPNNPNNPNNPNNPNNPNNPNPRFNRPR) shows a compositional bias: low complexity.

The protein belongs to the SM50 family. Expressed specifically in the micromere/primary mesenchyme cells (PMC) lineage.

It is found in the secreted. Its function is as follows. Major matrix protein of the sea urchin embryo spicule which directs crystal growth in certain orientations and inhibit growth in others. The protein is 41 kDa spicule matrix protein of Hemicentrotus pulcherrimus (Sea urchin).